A 414-amino-acid polypeptide reads, in one-letter code: Putative transporter AmpG 4 (414 aa).

12 helical membrane passes run 15–35, 44–63, 84–104, 109–129, 150–170, 177–197, 230–250, 268–288, 295–315, 324–344, 360–379, and 389–409; these read IFILGIVSGMPLVIIFSTLSV, IAVITTFAVARLSYSLKVFW, WLILCSSLMVLVLIAMSKENP, TSLYFLTIALGFLSSTFDIAV, VFGYRIGMLITGAGALYLAEI, LTFVIIAIIFAVATIFIITVN, FAVTILLAVIFFKLGDAMLGA, IIAKLYGLIATLVGGFAGGIV, FKGLIITGIAQSLTHFAFIWL, ALLIAITIENFAAAMGATALV, YALLSSSSSLCNNTVTIYAG, and GFFIFTIILALPALFILMYLN.

The protein belongs to the major facilitator superfamily.

It is found in the cell inner membrane. In Rickettsia felis (strain ATCC VR-1525 / URRWXCal2) (Rickettsia azadi), this protein is Putative transporter AmpG 4 (ampG4).